A 1340-amino-acid polypeptide reads, in one-letter code: Early transcription factor large subunit homolog (1340 aa).

Belongs to the asfivirus G1340L family.

The protein localises to the virion. In terms of biological role, putative initation factor. This African swine fever virus (isolate Tick/South Africa/Pretoriuskop Pr4/1996) (ASFV) protein is Early transcription factor large subunit homolog.